Reading from the N-terminus, the 355-residue chain is tRNA uridine(34) hydroxylase (355 aa).

The 95-residue stretch at 146-240 folds into the Rhodanese domain; that stretch reads DDPDTLFVDM…YARKAKEQGL (95 aa). Cys200 acts as the Cysteine persulfide intermediate in catalysis. The disordered stretch occupies residues 333 to 355; it reads NKSKGLLQATMHIPSPEKSADEK.

Belongs to the TrhO family.

The enzyme catalyses uridine(34) in tRNA + AH2 + O2 = 5-hydroxyuridine(34) in tRNA + A + H2O. In terms of biological role, catalyzes oxygen-dependent 5-hydroxyuridine (ho5U) modification at position 34 in tRNAs. The sequence is that of tRNA uridine(34) hydroxylase from Yersinia pseudotuberculosis serotype O:1b (strain IP 31758).